A 169-amino-acid polypeptide reads, in one-letter code: Desumoylating isopeptidase 1 (169 aa).

The PPPDE domain maps to 8 to 150 (HLVRLYVYDM…LGQALRPLLD (143 aa)). Histidine 39 is an active-site residue. The Nuclear export signal 1 signature appears at 84-92 (IFLEYLSSL). Cysteine 109 is a catalytic residue. The Nuclear export signal 2 motif lies at 140–154 (PLGQALRPLLDSVQI).

It belongs to the DeSI family. Homodimer.

It localises to the cytoplasm. The protein localises to the nucleus. It catalyses the reaction S-hexadecanoyl-L-cysteinyl-[protein] + H2O = L-cysteinyl-[protein] + hexadecanoate + H(+). In terms of biological role, protease which deconjugates SUMO1, SUMO2 and SUMO3 from some substrate proteins. Has isopeptidase but not SUMO-processing activity. Collaborates with ubqln4 in the export of ubiquitinated proteins from the nucleus to the cytoplasm. Exhibits palmitoyl protein thioesterase (S-depalmitoylation) activity towards synthetic substrates 4-methylumbelliferyl-6-S-palmitoyl-beta-D-glucopyranoside and S-depalmitoylation probe 5 (DPP-5). The polypeptide is Desumoylating isopeptidase 1 (Xenopus laevis (African clawed frog)).